The primary structure comprises 165 residues: Shikimate kinase (165 aa).

11–16 (GAGKTT) lines the ATP pocket. Residue threonine 15 coordinates Mg(2+). Substrate is bound by residues aspartate 33, arginine 57, and glycine 78. Position 116 (arginine 116) interacts with ATP. Residue arginine 134 coordinates substrate.

Belongs to the shikimate kinase family. Monomer. Mg(2+) is required as a cofactor.

The protein resides in the cytoplasm. The enzyme catalyses shikimate + ATP = 3-phosphoshikimate + ADP + H(+). The protein operates within metabolic intermediate biosynthesis; chorismate biosynthesis; chorismate from D-erythrose 4-phosphate and phosphoenolpyruvate: step 5/7. Functionally, catalyzes the specific phosphorylation of the 3-hydroxyl group of shikimic acid using ATP as a cosubstrate. This Bacillus cereus (strain AH187) protein is Shikimate kinase.